A 616-amino-acid polypeptide reads, in one-letter code: Dihydroxy-acid dehydratase (616 aa).

Mg(2+) is bound at residue aspartate 81. Cysteine 122 lines the [2Fe-2S] cluster pocket. Mg(2+) is bound by residues aspartate 123 and lysine 124. Lysine 124 bears the N6-carboxylysine mark. Cysteine 195 contacts [2Fe-2S] cluster. Glutamate 491 contributes to the Mg(2+) binding site. The active-site Proton acceptor is the serine 517.

This sequence belongs to the IlvD/Edd family. As to quaternary structure, homodimer. Requires [2Fe-2S] cluster as cofactor. Mg(2+) is required as a cofactor.

The catalysed reaction is (2R)-2,3-dihydroxy-3-methylbutanoate = 3-methyl-2-oxobutanoate + H2O. The enzyme catalyses (2R,3R)-2,3-dihydroxy-3-methylpentanoate = (S)-3-methyl-2-oxopentanoate + H2O. Its pathway is amino-acid biosynthesis; L-isoleucine biosynthesis; L-isoleucine from 2-oxobutanoate: step 3/4. The protein operates within amino-acid biosynthesis; L-valine biosynthesis; L-valine from pyruvate: step 3/4. Functionally, functions in the biosynthesis of branched-chain amino acids. Catalyzes the dehydration of (2R,3R)-2,3-dihydroxy-3-methylpentanoate (2,3-dihydroxy-3-methylvalerate) into 2-oxo-3-methylpentanoate (2-oxo-3-methylvalerate) and of (2R)-2,3-dihydroxy-3-methylbutanoate (2,3-dihydroxyisovalerate) into 2-oxo-3-methylbutanoate (2-oxoisovalerate), the penultimate precursor to L-isoleucine and L-valine, respectively. The chain is Dihydroxy-acid dehydratase from Salmonella paratyphi C (strain RKS4594).